We begin with the raw amino-acid sequence, 168 residues long: Peroxynitrite isomerase (168 aa).

The GXWXGXG motif lies at 25–31 (GTWRGAG). A heme b-binding site is contributed by His-160.

It belongs to the nitrobindin family. Homodimer. Requires heme b as cofactor.

It carries out the reaction peroxynitrite = nitrate. It functions in the pathway nitrogen metabolism. Functionally, heme-binding protein able to scavenge peroxynitrite and to protect free L-tyrosine against peroxynitrite-mediated nitration, by acting as a peroxynitrite isomerase that converts peroxynitrite to nitrate. Therefore, this protein likely plays a role in peroxynitrite sensing and in the detoxification of reactive nitrogen and oxygen species (RNS and ROS, respectively). Is able to bind nitric oxide (NO) in vitro, but may act as a sensor of peroxynitrite levels in vivo. The chain is Peroxynitrite isomerase from Nocardia farcinica (strain IFM 10152).